Here is a 508-residue protein sequence, read N- to C-terminus: Maturase K (508 aa).

It belongs to the intron maturase 2 family. MatK subfamily.

It localises to the plastid. The protein resides in the chloroplast. Its function is as follows. Usually encoded in the trnK tRNA gene intron. Probably assists in splicing its own and other chloroplast group II introns. This Ranunculus trichophyllus (Whitewater crowfoot) protein is Maturase K.